Reading from the N-terminus, the 115-residue chain is UPF0597 protein HI_0855 (115 aa).

The protein belongs to the UPF0597 family.

This is UPF0597 protein HI_0855 from Haemophilus influenzae (strain ATCC 51907 / DSM 11121 / KW20 / Rd).